A 127-amino-acid chain; its full sequence is ALK and LTK ligand 1 (127 aa).

The signal sequence occupies residues 1–27 (MWLTKPSTPVSALLLLALALSPPGTQG). Intrachain disulfides connect cysteine 88/cysteine 124 and cysteine 102/cysteine 111.

Belongs to the ALKAL family.

Its subcellular location is the secreted. It localises to the cell membrane. In terms of biological role, cytokine that acts as a physiological ligand for receptor tyrosine kinase LTK, leading to its activation. Monomeric ALKAL1 binds to LTK, leading to LTK homodimerization and activation. In contrast to ALKAL2, does not act as a potent physiological ligand for ALK. The sequence is that of ALK and LTK ligand 1 from Mus musculus (Mouse).